A 153-amino-acid chain; its full sequence is Cytochrome c-type biogenesis protein CcmE (153 aa).

Residues Met-1–Arg-8 are Cytoplasmic-facing. A helical; Signal-anchor for type II membrane protein membrane pass occupies residues Leu-9–Ala-29. Residues Leu-30–Arg-153 lie on the Periplasmic side of the membrane. His-123 and Tyr-127 together coordinate heme.

The protein belongs to the CcmE/CycJ family.

The protein resides in the cell inner membrane. In terms of biological role, heme chaperone required for the biogenesis of c-type cytochromes. Transiently binds heme delivered by CcmC and transfers the heme to apo-cytochromes in a process facilitated by CcmF and CcmH. The sequence is that of Cytochrome c-type biogenesis protein CcmE from Stenotrophomonas maltophilia (strain R551-3).